The chain runs to 109 residues: Small ribosomal subunit protein uS17 (109 aa).

This sequence belongs to the universal ribosomal protein uS17 family. Part of the 30S ribosomal subunit.

Its function is as follows. One of the primary rRNA binding proteins, it binds specifically to the 5'-end of 16S ribosomal RNA. This is Small ribosomal subunit protein uS17 from Thermoplasma acidophilum (strain ATCC 25905 / DSM 1728 / JCM 9062 / NBRC 15155 / AMRC-C165).